A 358-amino-acid chain; its full sequence is Protein-glutamate methylesterase/protein-glutamine glutaminase (358 aa).

One can recognise a Response regulatory domain in the interval 5–122; it reads SVLIIDDSAL…RNSLEAYTDE (118 aa). Residue Asp-56 is modified to 4-aspartylphosphate. One can recognise a CheB-type methylesterase domain in the interval 159–351; sequence GISTEKLIII…RRILARLVGA (193 aa). Catalysis depends on residues Ser-171, His-197, and Asp-293.

Belongs to the CheB family. Post-translationally, phosphorylated by CheA. Phosphorylation of the N-terminal regulatory domain activates the methylesterase activity.

It localises to the cytoplasm. It catalyses the reaction [protein]-L-glutamate 5-O-methyl ester + H2O = L-glutamyl-[protein] + methanol + H(+). It carries out the reaction L-glutaminyl-[protein] + H2O = L-glutamyl-[protein] + NH4(+). Functionally, involved in chemotaxis. Part of a chemotaxis signal transduction system that modulates chemotaxis in response to various stimuli. Catalyzes the demethylation of specific methylglutamate residues introduced into the chemoreceptors (methyl-accepting chemotaxis proteins or MCP) by CheR. Also mediates the irreversible deamidation of specific glutamine residues to glutamic acid. This is Protein-glutamate methylesterase/protein-glutamine glutaminase from Nitrosomonas europaea (strain ATCC 19718 / CIP 103999 / KCTC 2705 / NBRC 14298).